A 434-amino-acid chain; its full sequence is T-box transcription factor T homolog (434 aa).

The segment at residues 50-220 (LWKKFHKLTN…YNPFAKAFLD (171 aa)) is a DNA-binding region (T-box). 2 stretches are compositionally biased toward polar residues: residues 355–364 (SGFSHVSSPQ) and 376–385 (HPTSSHQHNL). Residues 355-385 (SGFSHVSSPQSPLPTGLFRNPHPTSSHQHNL) are disordered.

In the developing embryo, expressed in the mesenchyme founder cells, vegetal plate of the mesenchyme blastula, extending tip of the invaginating archenteron and, later, in the secondary mesenchyme cells.

It is found in the nucleus. Its function is as follows. Involved in the transcriptional regulation of genes required for mesoderm differentiation. This is T-box transcription factor T homolog from Hemicentrotus pulcherrimus (Sea urchin).